Here is a 300-residue protein sequence, read N- to C-terminus: Ribosomal RNA small subunit methyltransferase H (300 aa).

Residues 43–45 (AGH), aspartate 60, aspartate 105, and glutamine 112 contribute to the S-adenosyl-L-methionine site.

It belongs to the methyltransferase superfamily. RsmH family.

The protein localises to the cytoplasm. It carries out the reaction cytidine(1402) in 16S rRNA + S-adenosyl-L-methionine = N(4)-methylcytidine(1402) in 16S rRNA + S-adenosyl-L-homocysteine + H(+). Specifically methylates the N4 position of cytidine in position 1402 (C1402) of 16S rRNA. The sequence is that of Ribosomal RNA small subunit methyltransferase H from Deinococcus deserti (strain DSM 17065 / CIP 109153 / LMG 22923 / VCD115).